An 889-amino-acid polypeptide reads, in one-letter code: Phosphatidylinositol 3-kinase VPS34 (889 aa).

Residues 34-184 (ASEKLIDPQL…EWIDELVLKK (151 aa)) form the C2 PI3K-type domain. In terms of domain architecture, PIK helical spans 298-540 (SDKHVKPDAK…ESFLSRLNSN (243 aa)). The PI3K/PI4K catalytic domain maps to 607–873 (MIDQCNVFKS…LINDSVNALL (267 aa)). The segment at 613-619 (VFKSSLS) is G-loop. Positions 742 to 750 (GVGDRHLDN) are catalytic loop. The tract at residues 761–782 (HADFGYILGQDPKPFPPLMKLP) is activation loop.

This sequence belongs to the PI3/PI4-kinase family. Type III PI4K subfamily. In terms of assembly, component of the autophagy-specific VPS34 PI3-kinase complex I composed of VPS15, VPS30, VPS34, ATG14 and ATG38; and of the VPS34 PI3-kinase complex II composed of VPS15, VPS30, VPS34 and VPS38. Autophosphorylated.

It localises to the golgi apparatus. It is found in the trans-Golgi network membrane. The protein localises to the endosome membrane. It carries out the reaction a 1,2-diacyl-sn-glycero-3-phospho-(1D-myo-inositol) + ATP = a 1,2-diacyl-sn-glycero-3-phospho-(1D-myo-inositol-3-phosphate) + ADP + H(+). Its function is as follows. Multifunctional phosphatidylinositol 3-kinase that plays a role in signaling in modulation of host immune response, intracellular survival and virulence. Catalytic subunit of the autophagy-specific VPS34 PI3-kinase complex I essential to recruit the ATG8-phosphatidylinositol conjugate and the ATG12-ATG5 conjugate to the pre-autophagosomal structure. Also involved in endosome-to-Golgi retrograde transport as part of the VPS34 PI3-kinase complex II. This second complex is required for the endosome-to-Golgi retrieval of PEP1 and KEX2, and the recruitment of VPS5 and VPS7, two components of the retromer complex, to endosomal membranes (probably through the synthesis of a specific pool of phosphatidylinositol 3-phosphate recruiting the retromer to the endosomes). Finally, it might also be involved in ethanol tolerance and cell wall integrity. The protein is Phosphatidylinositol 3-kinase VPS34 of Candida glabrata (strain ATCC 2001 / BCRC 20586 / JCM 3761 / NBRC 0622 / NRRL Y-65 / CBS 138) (Yeast).